The sequence spans 293 residues: Formamidopyrimidine-DNA glycosylase (293 aa).

The active-site Schiff-base intermediate with DNA is the P2. E3 functions as the Proton donor in the catalytic mechanism. The Proton donor; for beta-elimination activity role is filled by K58. DNA contacts are provided by H104, R123, and K166. The FPG-type zinc finger occupies 257-293 (AAYDREGERCRTDGCGGAVKRFVQNGRSTFWCSGCQK). R283 (proton donor; for delta-elimination activity) is an active-site residue.

The protein belongs to the FPG family. In terms of assembly, monomer. The cofactor is Zn(2+).

The enzyme catalyses Hydrolysis of DNA containing ring-opened 7-methylguanine residues, releasing 2,6-diamino-4-hydroxy-5-(N-methyl)formamidopyrimidine.. It carries out the reaction 2'-deoxyribonucleotide-(2'-deoxyribose 5'-phosphate)-2'-deoxyribonucleotide-DNA = a 3'-end 2'-deoxyribonucleotide-(2,3-dehydro-2,3-deoxyribose 5'-phosphate)-DNA + a 5'-end 5'-phospho-2'-deoxyribonucleoside-DNA + H(+). Functionally, involved in base excision repair of DNA damaged by oxidation or by mutagenic agents. Acts as a DNA glycosylase that recognizes and removes damaged bases. Has a preference for oxidized purines, such as 7,8-dihydro-8-oxoguanine (8-oxoG). Has AP (apurinic/apyrimidinic) lyase activity and introduces nicks in the DNA strand. Cleaves the DNA backbone by beta-delta elimination to generate a single-strand break at the site of the removed base with both 3'- and 5'-phosphates. The chain is Formamidopyrimidine-DNA glycosylase from Rhodopseudomonas palustris (strain BisB5).